A 108-amino-acid chain; its full sequence is uncharacterized protein (108 aa).

The segment covering 48-73 has biased composition (low complexity); sequence NSNIPSSSSSSPSFASFFSSTSTSAT. The tract at residues 48 to 81 is disordered; that stretch reads NSNIPSSSSSSPSFASFFSSTSTSATLNGSSNNK.

This is an uncharacterized protein from Dictyostelium discoideum (Social amoeba).